We begin with the raw amino-acid sequence, 182 residues long: Homeobox protein pnx (182 aa).

The segment at 1 to 34 is important for interaction with tle3a; the sequence is MHEETSNSTLQGKTSFSIADILDPAKFNGTRETR. The segment at 24 to 63 is disordered; sequence PAKFNGTRETREISNNRESPKTTSPTQDPSAPNIANASAA. The span at 29–43 shows a compositional bias: basic and acidic residues; it reads GTRETREISNNRESP. Residues 52 to 63 show a composition bias toward low complexity; the sequence is PSAPNIANASAA. A DNA-binding region (homeobox) is located at residues 67–126; it reads SKRIRTAFTLDQLRILERSFQSSHYLSVFERHCIASALGLSETQVKIWFQNRRTKWKKEL.

It belongs to the NK-1 homeobox family. As to quaternary structure, interacts with tle3a.

It localises to the nucleus. Transcriptional repressor. Activity as a repressor is enhanced by binding to the corepressor tle3a. This chain is Homeobox protein pnx, found in Danio rerio (Zebrafish).